The chain runs to 313 residues: MNWRCDVQNFEPDVKISLTRVGVTNLKKLVRLKRTNKRPIILLSTFEVFVNLPSSQKGIHMSRNPEVIEGIIDEALELESYEMETICEEIVKRLFEKHEYATEAEVFMVSDFMTKEKSPISGKYSQEIHKIMGGAKGIKKDDEIELTKIVGAEVVGITACPCAQNLIKEICIKNLKEKGFSDEDIDKILDSVIFATHNQRGIGRIILEVPTGYDIEIMDIIEIIKKSMSAEIHGILKRADEAYVVEQSHKNPKFVEDCVREMAKRVVEKFKHLPDETKVLIRQINMESIHRHDAFAEKVATLGELRRELLSYE.

Belongs to the GTP cyclohydrolase IV family. As to quaternary structure, homodimer. Fe(2+) serves as cofactor.

It catalyses the reaction GTP + H2O = 7,8-dihydroneopterin 2',3'-cyclic phosphate + formate + diphosphate + H(+). Its pathway is cofactor biosynthesis; 5,6,7,8-tetrahydromethanopterin biosynthesis. With respect to regulation, inhibited by GTP concentrations greater than 0.3 mM and by 2-amino-5-formylamino-6-ribofuranosylamino-4(3H)-pyrimidinone 5'-phosphate (fapyGMP). Partial inhibition is observed when 2 mM GMP, dGTP, or 7-methyl-GTP was included along with 2 mM GTP. In terms of biological role, converts GTP to 7,8-dihydro-D-neopterin 2',3'-cyclic phosphate, the first intermediate in the biosynthesis of coenzyme methanopterin. It is also able to utilize a variety of GTP analogs as substrates, including GDP, beta,gamma-methylene-GTP and GTP-[gamma-thio]. The polypeptide is GTP cyclohydrolase MptA (mptA) (Methanocaldococcus jannaschii (strain ATCC 43067 / DSM 2661 / JAL-1 / JCM 10045 / NBRC 100440) (Methanococcus jannaschii)).